Here is a 176-residue protein sequence, read N- to C-terminus: Translation initiation factor IF-3 (176 aa).

Belongs to the IF-3 family. As to quaternary structure, monomer.

It localises to the cytoplasm. Its function is as follows. IF-3 binds to the 30S ribosomal subunit and shifts the equilibrium between 70S ribosomes and their 50S and 30S subunits in favor of the free subunits, thus enhancing the availability of 30S subunits on which protein synthesis initiation begins. This chain is Translation initiation factor IF-3, found in Nitratidesulfovibrio vulgaris (strain DSM 19637 / Miyazaki F) (Desulfovibrio vulgaris).